Here is a 93-residue protein sequence, read N- to C-terminus: UPF0521 protein B (93 aa).

Residues 2-58 are a coiled coil; the sequence is SLKEVITSLKNDFHSINKEIDSMKENNEKQEEKIFQEIKKLKLEMELLRKDNLSFKT.

Belongs to the UPF0521 family.

This Dictyostelium discoideum (Social amoeba) protein is UPF0521 protein B.